The chain runs to 100 residues: Cell division topological specificity factor (100 aa).

It belongs to the MinE family.

Prevents the cell division inhibition by proteins MinC and MinD at internal division sites while permitting inhibition at polar sites. This ensures cell division at the proper site by restricting the formation of a division septum at the midpoint of the long axis of the cell. The sequence is that of Cell division topological specificity factor from Blochmanniella floridana.